The primary structure comprises 590 residues: Aspartate--tRNA(Asp/Asn) ligase (590 aa).

Glu170 lines the L-aspartate pocket. The aspartate stretch occupies residues 194–197; it reads QLFK. Position 216 (Arg216) interacts with L-aspartate. ATP is bound by residues 216–218 and Gln225; that span reads RDE. His448 is a binding site for L-aspartate. ATP is bound at residue Glu482. L-aspartate is bound at residue Arg489. 534 to 537 contributes to the ATP binding site; sequence GWDR. Residues 557 to 590 form a disordered region; that stretch reads SGGGADPLTGAPAPITPQQRRESGIDAKPKKDGE. The span at 575–590 shows a compositional bias: basic and acidic residues; sequence QRRESGIDAKPKKDGE.

The protein belongs to the class-II aminoacyl-tRNA synthetase family. Type 1 subfamily. As to quaternary structure, homodimer.

It is found in the cytoplasm. The catalysed reaction is tRNA(Asx) + L-aspartate + ATP = L-aspartyl-tRNA(Asx) + AMP + diphosphate. Its function is as follows. Aspartyl-tRNA synthetase with relaxed tRNA specificity since it is able to aspartylate not only its cognate tRNA(Asp) but also tRNA(Asn). Reaction proceeds in two steps: L-aspartate is first activated by ATP to form Asp-AMP and then transferred to the acceptor end of tRNA(Asp/Asn). The polypeptide is Aspartate--tRNA(Asp/Asn) ligase (Mycobacterium sp. (strain KMS)).